The primary structure comprises 293 residues: AKT-interacting protein (293 aa).

A compositionally biased stretch (polar residues) spans 1–11; the sequence is MNPFWSMSTNA. Residues 1–44 form a disordered region; the sequence is MNPFWSMSTNAGRKRSDGEEQSGSGEQRASPARPPFGKKQLPSI. The UBC core domain occupies 75–223; the sequence is YLEYSLLAEF…VVDSVKLCNS (149 aa). The interval 260–293 is disordered; that stretch reads RPEDFNKGLPVSGLSWVKPGSTQPFSKEDNPLQT.

The protein belongs to the ubiquitin-conjugating enzyme family. FTS subfamily.

It localises to the cytoplasm. The protein localises to the cell membrane. In terms of biological role, may function to promote vesicle trafficking and/or fusion. May also regulate apoptosis. The chain is AKT-interacting protein (aktip) from Danio rerio (Zebrafish).